A 35-amino-acid chain; its full sequence is Photosystem II reaction center protein T (35 aa).

A helical membrane pass occupies residues 3-23; that stretch reads ALVYTFLLVSTLGIIFFAIFF.

It belongs to the PsbT family. PSII is composed of 1 copy each of membrane proteins PsbA, PsbB, PsbC, PsbD, PsbE, PsbF, PsbH, PsbI, PsbJ, PsbK, PsbL, PsbM, PsbT, PsbY, PsbZ, Psb30/Ycf12, at least 3 peripheral proteins of the oxygen-evolving complex and a large number of cofactors. It forms dimeric complexes.

Its subcellular location is the plastid. The protein localises to the chloroplast thylakoid membrane. Functionally, found at the monomer-monomer interface of the photosystem II (PS II) dimer, plays a role in assembly and dimerization of PSII. PSII is a light-driven water plastoquinone oxidoreductase, using light energy to abstract electrons from H(2)O, generating a proton gradient subsequently used for ATP formation. This is Photosystem II reaction center protein T from Ginkgo biloba (Ginkgo).